The sequence spans 1004 residues: 2-oxoglutarate dehydrogenase E1 component (1004 aa).

This sequence belongs to the alpha-ketoglutarate dehydrogenase family. In terms of assembly, homodimer. Part of the 2-oxoglutarate dehydrogenase (OGDH) complex composed of E1 (2-oxoglutarate dehydrogenase), E2 (dihydrolipoamide succinyltransferase) and E3 (dihydrolipoamide dehydrogenase); the complex contains multiple copies of the three enzymatic components (E1, E2 and E3). Requires thiamine diphosphate as cofactor.

It catalyses the reaction N(6)-[(R)-lipoyl]-L-lysyl-[protein] + 2-oxoglutarate + H(+) = N(6)-[(R)-S(8)-succinyldihydrolipoyl]-L-lysyl-[protein] + CO2. E1 component of the 2-oxoglutarate dehydrogenase (OGDH) complex which catalyzes the decarboxylation of 2-oxoglutarate, the first step in the conversion of 2-oxoglutarate to succinyl-CoA and CO(2). This is 2-oxoglutarate dehydrogenase E1 component from Brucella suis (strain ATCC 23445 / NCTC 10510).